A 793-amino-acid chain; its full sequence is DNA mismatch repair protein MutS (793 aa).

Position 589 to 596 (589 to 596) interacts with ATP; sequence GPNMSGKS.

The protein belongs to the DNA mismatch repair MutS family.

This protein is involved in the repair of mismatches in DNA. It is possible that it carries out the mismatch recognition step. This protein has a weak ATPase activity. This is DNA mismatch repair protein MutS from Thermotoga petrophila (strain ATCC BAA-488 / DSM 13995 / JCM 10881 / RKU-1).